Here is a 154-residue protein sequence, read N- to C-terminus: NADPH-dependent 7-cyano-7-deazaguanine reductase (154 aa).

Cys52 functions as the Thioimide intermediate in the catalytic mechanism. The active-site Proton donor is Asp59. Residues 74-76 and 93-94 each bind substrate; these read VES and HE.

The protein belongs to the GTP cyclohydrolase I family. QueF type 1 subfamily.

The protein localises to the cytoplasm. The enzyme catalyses 7-aminomethyl-7-carbaguanine + 2 NADP(+) = 7-cyano-7-deazaguanine + 2 NADPH + 3 H(+). It functions in the pathway tRNA modification; tRNA-queuosine biosynthesis. Its function is as follows. Catalyzes the NADPH-dependent reduction of 7-cyano-7-deazaguanine (preQ0) to 7-aminomethyl-7-deazaguanine (preQ1). This is NADPH-dependent 7-cyano-7-deazaguanine reductase from Rhizobium rhizogenes (strain K84 / ATCC BAA-868) (Agrobacterium radiobacter).